Here is a 942-residue protein sequence, read N- to C-terminus: Isoleucine--tRNA ligase (942 aa).

Residues 58-68 carry the 'HIGH' region motif; sequence PYANGDIHIGH. E566 provides a ligand contact to L-isoleucyl-5'-AMP. Residues 607-611 carry the 'KMSKS' region motif; it reads KMSKS. Residue K610 participates in ATP binding. Zn(2+) is bound by residues C905, C908, C925, and C928.

This sequence belongs to the class-I aminoacyl-tRNA synthetase family. IleS type 1 subfamily. Monomer. The cofactor is Zn(2+).

It is found in the cytoplasm. The catalysed reaction is tRNA(Ile) + L-isoleucine + ATP = L-isoleucyl-tRNA(Ile) + AMP + diphosphate. In terms of biological role, catalyzes the attachment of isoleucine to tRNA(Ile). As IleRS can inadvertently accommodate and process structurally similar amino acids such as valine, to avoid such errors it has two additional distinct tRNA(Ile)-dependent editing activities. One activity is designated as 'pretransfer' editing and involves the hydrolysis of activated Val-AMP. The other activity is designated 'posttransfer' editing and involves deacylation of mischarged Val-tRNA(Ile). This Vibrio campbellii (strain ATCC BAA-1116) protein is Isoleucine--tRNA ligase.